A 218-amino-acid chain; its full sequence is dTTP/UTP pyrophosphatase (218 aa).

Residues 1 to 10 (MTASPSSAEG) show a composition bias toward polar residues. Residues 1–20 (MTASPSSAEGSSGLPDRPKL) are disordered. The Proton acceptor role is filled by aspartate 87.

The protein belongs to the Maf family. YhdE subfamily. The cofactor is a divalent metal cation.

It is found in the cytoplasm. The enzyme catalyses dTTP + H2O = dTMP + diphosphate + H(+). The catalysed reaction is UTP + H2O = UMP + diphosphate + H(+). Functionally, nucleoside triphosphate pyrophosphatase that hydrolyzes dTTP and UTP. May have a dual role in cell division arrest and in preventing the incorporation of modified nucleotides into cellular nucleic acids. This chain is dTTP/UTP pyrophosphatase, found in Gluconobacter oxydans (strain 621H) (Gluconobacter suboxydans).